A 372-amino-acid chain; its full sequence is Glutamate 5-kinase (372 aa).

ATP is bound at residue Lys-14. Positions 54, 141, and 153 each coordinate substrate. ATP is bound at residue Thr-173–Asp-174. Residues Arg-280 to Met-358 enclose the PUA domain.

Belongs to the glutamate 5-kinase family.

It localises to the cytoplasm. The enzyme catalyses L-glutamate + ATP = L-glutamyl 5-phosphate + ADP. The protein operates within amino-acid biosynthesis; L-proline biosynthesis; L-glutamate 5-semialdehyde from L-glutamate: step 1/2. In terms of biological role, catalyzes the transfer of a phosphate group to glutamate to form L-glutamate 5-phosphate. This is Glutamate 5-kinase from Burkholderia orbicola (strain MC0-3).